We begin with the raw amino-acid sequence, 243 residues long: Uridylate kinase (243 aa).

ATP is bound at residue 14–17 (KLSG). G57 contacts UMP. 2 residues coordinate ATP: G58 and R62. Residues D77 and 139–146 (TGRPYFTT) contribute to the UMP site. The ATP site is built by N167, Y173, and D176.

Belongs to the UMP kinase family. Homohexamer.

It is found in the cytoplasm. It carries out the reaction UMP + ATP = UDP + ADP. Its pathway is pyrimidine metabolism; CTP biosynthesis via de novo pathway; UDP from UMP (UMPK route): step 1/1. Its activity is regulated as follows. Inhibited by UTP. Functionally, catalyzes the reversible phosphorylation of UMP to UDP. The protein is Uridylate kinase of Mycoplasmopsis pulmonis (strain UAB CTIP) (Mycoplasma pulmonis).